A 351-amino-acid chain; its full sequence is Histidinol-phosphate aminotransferase (351 aa).

An N6-(pyridoxal phosphate)lysine modification is found at Lys209.

Belongs to the class-II pyridoxal-phosphate-dependent aminotransferase family. Histidinol-phosphate aminotransferase subfamily. As to quaternary structure, homodimer. Requires pyridoxal 5'-phosphate as cofactor.

The enzyme catalyses L-histidinol phosphate + 2-oxoglutarate = 3-(imidazol-4-yl)-2-oxopropyl phosphate + L-glutamate. Its pathway is amino-acid biosynthesis; L-histidine biosynthesis; L-histidine from 5-phospho-alpha-D-ribose 1-diphosphate: step 7/9. This is Histidinol-phosphate aminotransferase from Chromohalobacter salexigens (strain ATCC BAA-138 / DSM 3043 / CIP 106854 / NCIMB 13768 / 1H11).